Here is a 1149-residue protein sequence, read N- to C-terminus: Guanine nucleotide exchange factor DBS (1149 aa).

Positions 52-224 (MATASDEIMH…DLGGTLDYCH (173 aa)) constitute a CRAL-TRIO domain. One copy of the Spectrin repeat lies at 355–454 (HFEQGFREVK…SEVTRRRDLL (100 aa)). Residues Ser457, Ser462, Ser471, and Ser480 each carry the phosphoserine modification. Residues 503–528 (LETGAENKIQELNKIYKEYECILNQD) are a coiled coil. The segment at 555 to 627 (KKLAAKQTRP…RTSSTGEEEE (73 aa)) is disordered. Residues 583-594 (PGSWRSSENSSS) show a composition bias toward low complexity. Basic and acidic residues predominate over residues 607-616 (AKSEMSEPRQ). The residue at position 621 (Ser621) is a Phosphoserine. Thr622 is subject to Phosphothreonine. A DH domain is found at 632 to 812 (LRRHVMNELL…LGILKAVNDS (181 aa)). A PH domain is found at 830–946 (KLLMQGSFSV…WVNEIRKVLT (117 aa)). A disordered region spans residues 956-1033 (SQHRALEQSH…EAPEEDGGWS (78 aa)). A compositionally biased stretch (low complexity) spans 964–978 (SHSLPLPTPASTSPT). 4 positions are modified to phosphoserine: Ser1033, Ser1034, Ser1041, and Ser1042. The SH3 domain maps to 1055–1116 (LVPGKYTVLM…PASSLATLLG (62 aa)).

It belongs to the MCF2 family. In terms of assembly, interacts with GTP-bound RAC1. Interacts with CDC42. Interacts with RHOA. Interacts with CCPG1, which results in specific inhibition of its exchange activity toward RHOA, but does not affect its activity on CDC42. Post-translationally, mainly phosphorylated on serine. In terms of tissue distribution, highest expression in the brain, where it is found in neurons and alpha-tanycytes (at protein level). Detected in brain, and at lower levels in the heart.

Its subcellular location is the cytoplasm. It localises to the cell membrane. Functionally, guanine nucleotide exchange factor that catalyzes guanine nucleotide exchange on RHOA and CDC42, and thereby contributes to the regulation of RHOA and CDC42 signaling pathways. Seems to lack activity with RAC1. Becomes activated and highly tumorigenic by truncation of the N-terminus. This Rattus norvegicus (Rat) protein is Guanine nucleotide exchange factor DBS (Mcf2l).